A 344-amino-acid chain; its full sequence is MIKVGIVGGTGYTGVELLRLLAQHPQARVEVITSRSEAGVKVVDMYPNLRGHYDDLQFSVPDTQRLGACDVVFFATPHGVAHALAGELLDAGTRVIDLSADFRLADAEEWARWYGQPHGAPALLEEAVYGLPEVNREKIRQARLIAVPGCYPTATQLGLIPLLEAGLADASRLIADCKSGVSGAGRGAKVGSLFCEAGESMMAYAVKGHRHLPEISQGLRRASGGEVGLTFVPHLTPMIRGIHATLYAHVADRSVDLQALFEKRYANEPFVDVMPAGSHPETRSVRGANVCRIAVHRPQGGDLVVVLSVIDNLVKGASGQALQNMNILFGLDERLGLSHAALLP.

C150 is an active-site residue.

This sequence belongs to the NAGSA dehydrogenase family. Type 1 subfamily.

It is found in the cytoplasm. The catalysed reaction is N-acetyl-L-glutamate 5-semialdehyde + phosphate + NADP(+) = N-acetyl-L-glutamyl 5-phosphate + NADPH + H(+). The protein operates within amino-acid biosynthesis; L-arginine biosynthesis; N(2)-acetyl-L-ornithine from L-glutamate: step 3/4. Catalyzes the NADPH-dependent reduction of N-acetyl-5-glutamyl phosphate to yield N-acetyl-L-glutamate 5-semialdehyde. The chain is N-acetyl-gamma-glutamyl-phosphate reductase from Pseudomonas paraeruginosa (strain DSM 24068 / PA7) (Pseudomonas aeruginosa (strain PA7)).